Here is a 382-residue protein sequence, read N- to C-terminus: Histone acetyltransferase type B subunit 2 (382 aa).

WD repeat units lie at residues 98–138 (ENNA…RYSH), 141–181 (PHTK…TTFK), 184–224 (IQKD…VVSQ), 228–268 (ESSN…ENSG), and 275–315 (GHSE…EEQQ). Positions 317–321 (EDAED) are interaction with the histone H4 N-terminus. A WD 6 repeat occupies 332–372 (GHTAGVSDLSWCPFKDWMIGSVADDNIVHLWEISKKLITNE).

It belongs to the WD repeat RBAP46/RBAP48/MSI1 family. As to quaternary structure, component of the HAT-B complex composed of at least HAT1 and HAT2. The HAT-B complex binds to histone H4 tail.

It localises to the cytoplasm. It is found in the nucleus. Regulatory subunit of the histone acetylase B (HAT-B) complex. The complex acetylates 'Lys-14' of histone H4 which is required for telomeric silencing. This Candida albicans (strain SC5314 / ATCC MYA-2876) (Yeast) protein is Histone acetyltransferase type B subunit 2 (HAT2).